The primary structure comprises 229 residues: ATP synthase subunit a (229 aa).

A run of 6 helical transmembrane segments spans residues 25–45 (ADAI…SILA), 82–102 (FFPL…IGLI), 111–131 (NINT…IVGI), 142–162 (FLGP…IGHF), 181–201 (LVLM…MMLM), and 202–222 (GVLV…IYIQ).

This sequence belongs to the ATPase A chain family. In terms of assembly, F-type ATPases have 2 components, CF(1) - the catalytic core - and CF(0) - the membrane proton channel. CF(1) has five subunits: alpha(3), beta(3), gamma(1), delta(1), epsilon(1). CF(0) has three main subunits: a(1), b(2) and c(9-12). The alpha and beta chains form an alternating ring which encloses part of the gamma chain. CF(1) is attached to CF(0) by a central stalk formed by the gamma and epsilon chains, while a peripheral stalk is formed by the delta and b chains.

It is found in the cell inner membrane. Key component of the proton channel; it plays a direct role in the translocation of protons across the membrane. The sequence is that of ATP synthase subunit a from Geotalea daltonii (strain DSM 22248 / JCM 15807 / FRC-32) (Geobacter daltonii).